A 1117-amino-acid chain; its full sequence is MSAPVFFNPYLCGGAARRRNGCSTVDSRRGNGPTKKGKKSFLQVVPRGVIYDGEKGLIKKVTQHPPRMFYNNVQYLLEPQMSWPTLPCRETCRVGCGREQPLRFHTFDQIDSTVYADSVEQIFLGYRRHVVPCGNVIRMFGRTCDGSSVCVNVFGQPSYFYCEYDGSEGYLDNYLSTVLKETEDVTKIVFTLDAQRVHKYSLFGYNTKYIENLYRVTLNNWPVCKRLAQNLQSRGLRVYEAGVDPVARFCVDRKIPSFGWCVIKRFYARSSGLASFCDIEIDCEIGDVEADDSDMSWPEYRCASFDIECMSGGDRFPDSSMVDDIVIQISVICYAVGRSGAESDGVSGAEAAVREHQHLFTLGPCAPIPGTHVYEFPSEYELLLGFFIFFKAYSPDILTGYNINLFDIKYLLQRMEKIYHANVSEFTKLRFGGRFSIYVPVGNKPRNASSASIKVHCTGTVVLDMYPVCVAKTSAPNYKLETMAEMYLNEHKDDLSYKEIPPTFLANDNGRAVVGRYCIKDALLVKRLFEKLNYHYEAASVARLARIPLRSVIFEGQQIRIYSCILEEAGERNMILPSFLTAKRPGELATESSPVASFEEDSEQTSDSSLGEVSSQGSSDGGVGYQGATVLEPDVGFYDTPVAVFDFASLYPSIIMRHNLCYSTYLPLGRDDGLSDDDVFLLEFDDGTRYGFVREHVRKSILGELLARWLAKRKSVRKVLAECQDEVEKLILDKYQLALKVTCNAFYGFTGVSSGMMPCLPIAAAITRIGRDMLMSVVDYVNTYMGHAEFWLRYLGEEDLTGDALNVKVIYGDTDSVFVICGGVKCGSVLEHGEAIAGHITRALFREPIKLEFEKVFVNLMMICKKRYVGRIYGQTKLSMKGIELVRKTACEYVKSTVRNVLNMIFFEDDVSAGAVELSRMTMDDVKRHGVPSGFYRIVEALSNARDELYLNRVDVKKLVLSASLSQEVSAYKQQNLPHLRVIQRLAARREELPSVGDRVPYVLIAPPPGSSKNVPNYEISEDPGYVIEHKLPVNGEKYFEHVVKTVTNVLGPIIPKDCARKEKFLSYVLPQRVYVSRPFMPYACAANELVVACDDGGVMMGVYGIKPVMCGVSVTN.

A disordered region spans residues 591–621 (ESSPVASFEEDSEQTSDSSLGEVSSQGSSDG). A compositionally biased stretch (low complexity) spans 606–618 (SDSSLGEVSSQGS).

The protein belongs to the DNA polymerase type-B family.

Its subcellular location is the host nucleus. It carries out the reaction DNA(n) + a 2'-deoxyribonucleoside 5'-triphosphate = DNA(n+1) + diphosphate. This is DNA polymerase from Cavia porcellus (Guinea pig).